The primary structure comprises 728 residues: Phomopsene synthase (728 aa).

Residues 1 to 327 (MEYRYSYVID…PRYHSDQSLD (327 aa)) are terpene cyclase. Mg(2+) is bound by residues Asp-94 and Asp-98. Residues Asp-94, Asp-98, 181–184 (RIVD), Asn-226, 230–234 (SWEKE), and 319–320 (RY) contribute to the substrate site. The DDXXD 1 motif lies at 94–98 (DDLVD). Positions 226–234 (NDVQSWEKE) match the NSE/DTE motif. The interval 328 to 728 (EMMVARMKYG…FRFLLSLLKV (401 aa)) is prenyltransferase. Basic and acidic residues predominate over residues 352-363 (ENRGTKRTHQDD). The interval 352–379 (ENRGTKRTHQDDTEGVQSVKRFNGASTK) is disordered. A run of 3 repeats spans residues 381-386 (GINGTN), 387-392 (GINGLN), and 393-398 (GINGSN). The segment at 381 to 398 (GINGTNGINGLNGINGSN) is 3 X 6 AA approximate tandem repeats. Positions 447, 450, and 479 each coordinate isopentenyl diphosphate. Asp-486 and Asp-490 together coordinate Mg(2+). Residues 486-490 (DDVQD) carry the DDXXD 2 motif. Arg-495 is a dimethylallyl diphosphate binding site. Isopentenyl diphosphate is bound at residue Arg-496. Dimethylallyl diphosphate is bound by residues Lys-574, Thr-575, Gln-610, Asn-617, Lys-627, and Lys-637.

It in the N-terminal section; belongs to the terpene synthase family. In the C-terminal section; belongs to the FPP/GGPP synthase family. In terms of assembly, hexamer. Mg(2+) serves as cofactor.

The catalysed reaction is isopentenyl diphosphate + (2E,6E)-farnesyl diphosphate = (2E,6E,10E)-geranylgeranyl diphosphate + diphosphate. The protein operates within secondary metabolite biosynthesis; terpenoid biosynthesis. Its function is as follows. Bifunctional terpene synthase; part of the gene cluster that mediates the biosynthesis of the diterpene methyl phomopsenonate. At first, the universal precursor of diterpene, geranylgeranyl diphosphate (GGPP) is provided and is cyclized by the unusual bifunctional terpene synthase PaPS to give phomopsene. The C-terminal prenyltransferase domain of PaPS catalyzes formation of GGPP, whereas the N-terminal terpene cyclase domain catalyzes the cyclization of GGPP to phomopsene. Since the oxidation of a methylgroup to a carboxyl group is frequently catalyzed by a cytochrome P450 monooxygenase, the C-16 methyl group would be oxidized by the cluster-specific cytochrome P450 monooxygenase ORF3. Subsequently, oxidation of the allylic position and methylation of the carboxyl group may give methyl phomopsenonate. Although further study is necessary to identify genes such as a monooxygenase and a methyltransferase, the predicted functions of genes on the cluster are correlated with the structure of methyl phomopsenonate. This chain is Phomopsene synthase, found in Phomopsis amygdali (Fusicoccum amygdali).